A 262-amino-acid polypeptide reads, in one-letter code: Type II restriction enzyme MspI (262 aa).

It carries out the reaction Endonucleolytic cleavage of DNA to give specific double-stranded fragments with terminal 5'-phosphates.. Functionally, a P subtype restriction enzyme that recognizes the double-stranded sequence 5'-CCGG-3' and cleaves after C-1. This is Type II restriction enzyme MspI (mspIR) from Moraxella sp.